A 481-amino-acid chain; its full sequence is MTDLSAFWPQCLARFEAELSAQQFNTWIKPLVCVAGEDAIALYAANRFSLGFVKERFLSRIETFAEDILGRPVTIELRIGGAQAGASAPAAASPRSPGRPAPAPVAATPTTGSLADSIVSDVPLPNVKLTAPKPAIGGGHESTRLNPAFTFESLVTGKGNQLARAAALQIADNPGDSTYNPFFVYGGVGLGKTHLIQAIGNHVYQKNPQAKIRYIHAERYVADIMRAYQHKAFDEFKRYYHSLDLLLIDDIQFFAGKNRTMEEFFYAFNALLEGGKQVIMTCDSYPKQIEGMDERLISRFSWGLTVEIQPPELEMRVAILMKKAEADNLKLGNDVAFFIAQNVRSNVRELEGALKRVVAYSRFSNQPISLDLVKEALKDILAAGNRQISVDNIQKTVADYYKIKLSDMHSKKRSRDIARPRQVAMALAKELTSMSLPNIGDAFGGRDHTTVLHACKTIAEMRESDPDISRDYAALQQMLRN.

The segment at 1–71 (MTDLSAFWPQ…ETFAEDILGR (71 aa)) is domain I, interacts with DnaA modulators. The domain II stretch occupies residues 71–143 (RPVTIELRIG…PAIGGGHEST (73 aa)). The span at 86–96 (ASAPAAASPRS) shows a compositional bias: low complexity. Positions 86–110 (ASAPAAASPRSPGRPAPAPVAATPT) are disordered. A domain III, AAA+ region region spans residues 144 to 361 (RLNPAFTFES…GALKRVVAYS (218 aa)). ATP-binding residues include Gly189, Gly191, Lys192, and Thr193. Positions 362 to 481 (RFSNQPISLD…YAALQQMLRN (120 aa)) are domain IV, binds dsDNA.

This sequence belongs to the DnaA family. Oligomerizes as a right-handed, spiral filament on DNA at oriC.

Its subcellular location is the cytoplasm. Functionally, plays an essential role in the initiation and regulation of chromosomal replication. ATP-DnaA binds to the origin of replication (oriC) to initiate formation of the DNA replication initiation complex once per cell cycle. Binds the DnaA box (a 9 base pair repeat at the origin) and separates the double-stranded (ds)DNA. Forms a right-handed helical filament on oriC DNA; dsDNA binds to the exterior of the filament while single-stranded (ss)DNA is stabiized in the filament's interior. The ATP-DnaA-oriC complex binds and stabilizes one strand of the AT-rich DNA unwinding element (DUE), permitting loading of DNA polymerase. After initiation quickly degrades to an ADP-DnaA complex that is not apt for DNA replication. Binds acidic phospholipids. The sequence is that of Chromosomal replication initiator protein DnaA from Laribacter hongkongensis (strain HLHK9).